The following is a 275-amino-acid chain: NH(3)-dependent NAD(+) synthetase (275 aa).

An ATP-binding site is contributed by 46–53 (GISGGQDS). A Mg(2+)-binding site is contributed by aspartate 52. Arginine 140 is a binding site for deamido-NAD(+). An ATP-binding site is contributed by threonine 160. Residue glutamate 165 participates in Mg(2+) binding. The deamido-NAD(+) site is built by lysine 173 and aspartate 180. 2 residues coordinate ATP: lysine 189 and threonine 211. 260–261 (HK) is a deamido-NAD(+) binding site.

This sequence belongs to the NAD synthetase family. As to quaternary structure, homodimer.

The enzyme catalyses deamido-NAD(+) + NH4(+) + ATP = AMP + diphosphate + NAD(+) + H(+). The protein operates within cofactor biosynthesis; NAD(+) biosynthesis; NAD(+) from deamido-NAD(+) (ammonia route): step 1/1. Catalyzes the ATP-dependent amidation of deamido-NAD to form NAD. Uses ammonia as a nitrogen source. This Enterobacter sp. (strain 638) protein is NH(3)-dependent NAD(+) synthetase.